The chain runs to 280 residues: 2-dehydro-3-deoxyphosphooctonate aldolase (280 aa).

The protein belongs to the KdsA family.

It localises to the cytoplasm. It catalyses the reaction D-arabinose 5-phosphate + phosphoenolpyruvate + H2O = 3-deoxy-alpha-D-manno-2-octulosonate-8-phosphate + phosphate. The protein operates within carbohydrate biosynthesis; 3-deoxy-D-manno-octulosonate biosynthesis; 3-deoxy-D-manno-octulosonate from D-ribulose 5-phosphate: step 2/3. It participates in bacterial outer membrane biogenesis; lipopolysaccharide biosynthesis. This is 2-dehydro-3-deoxyphosphooctonate aldolase from Thiobacillus denitrificans (strain ATCC 25259 / T1).